The primary structure comprises 527 residues: Thymidine kinase (527 aa).

Positions 1-57 (MTGRGQPPKKNDTYDYPRKQPPKNGSYDNYDYPTSTKTRSTNKQRKDSNYPPRETIF) are disordered. Residues 9–18 (KKNDTYDYPR) show a composition bias toward basic and acidic residues. The span at 32–41 (YPTSTKTRST) shows a compositional bias: polar residues. 216-223 (GSIGVGKT) provides a ligand contact to ATP. Glu243 serves as the catalytic Proton acceptor. Substrate-binding residues include Tyr260 and Gln281. An ATP-binding site is contributed by Arg368. Arg374 lines the substrate pocket.

Belongs to the herpesviridae thymidine kinase family. In terms of assembly, homodimer.

The catalysed reaction is thymidine + ATP = dTMP + ADP + H(+). Catalyzes the transfer of the gamma-phospho group of ATP to thymidine to generate dTMP in the salvage pathway of pyrimidine synthesis. The dTMP serves as a substrate for DNA polymerase during viral DNA replication. Allows the virus to be reactivated and to grow in non-proliferative cells lacking a high concentration of phosphorylated nucleic acid precursors. This Saimiriine herpesvirus 2 (strain 11) (SaHV-2) protein is Thymidine kinase.